We begin with the raw amino-acid sequence, 1154 residues long: Coiled-coil domain-containing protein 136 (1154 aa).

The tract at residues 1–48 (MQAMEGEVLLPALYEEEEEEEEEEEEVEEEEEQVQKGGSVGSLSVNKH) is disordered. Residues 14 to 32 (YEEEEEEEEEEEEVEEEEE) are compositionally biased toward acidic residues. Phosphoserine is present on serine 52. Coiled coils occupy residues 696–733 (QAKQELLQQEQGRLLEERKRLQADLQLCLEEMQLLQVQ) and 859–974 (KLQA…RPSV). Residues 1031–1058 (DGLAKEEEKKEEMEEEKKQVKEEAKEQC) are compositionally biased toward basic and acidic residues. Residues 1031 to 1131 (DGLAKEEEKK…SSPTPNPPIF (101 aa)) form a disordered region. Residues 1077–1109 (DQEENEEDKEEEEKEEDSEEEEDDADSSLESPE) are compositionally biased toward acidic residues. Residues 1130–1150 (IFSLPLVGLVVISALLWCWWA) traverse the membrane as a helical segment.

Expressed in gastric tissues. Down-regulated in gastric cancer.

Its subcellular location is the cytoplasmic vesicle. It is found in the secretory vesicle. The protein localises to the acrosome membrane. Its function is as follows. May play a role in acrosome formation in spermatogenesis and in fertilization. This is Coiled-coil domain-containing protein 136 (CCDC136) from Homo sapiens (Human).